The sequence spans 100 residues: Urease subunit gamma (100 aa).

Belongs to the urease gamma subunit family. As to quaternary structure, heterotrimer of UreA (gamma), UreB (beta) and UreC (alpha) subunits. Three heterotrimers associate to form the active enzyme.

It localises to the cytoplasm. The catalysed reaction is urea + 2 H2O + H(+) = hydrogencarbonate + 2 NH4(+). The protein operates within nitrogen metabolism; urea degradation; CO(2) and NH(3) from urea (urease route): step 1/1. This Staphylococcus saprophyticus subsp. saprophyticus (strain ATCC 15305 / DSM 20229 / NCIMB 8711 / NCTC 7292 / S-41) protein is Urease subunit gamma.